The chain runs to 346 residues: Heparan sulfate glucosamine 3-O-sulfotransferase 5 (346 aa).

Residues 1–12 (MLFKQQAWLRQK) lie on the Cytoplasmic side of the membrane. A helical; Signal-anchor for type II membrane protein membrane pass occupies residues 13-32 (LLVLGSLAVGSLLYLVARVG). The Lumenal portion of the chain corresponds to 33–346 (SLDRLQPICP…QITGRTLNWP (314 aa)). Residue 100–104 (KGGTR) coordinates 3'-phosphoadenylyl sulfate. Substrate contacts are provided by residues 122-128 (EIHFFDN) and 155-158 (KSPA). Residues Arg-183 and Ser-191 each contribute to the 3'-phosphoadenylyl sulfate site. Residue 226 to 227 (YK) participates in substrate binding. A glycan (N-linked (GlcNAc...) asparagine) is linked at Asn-287. Tyr-293 serves as a coordination point for 3'-phosphoadenylyl sulfate. The cysteines at positions 294 and 304 are disulfide-linked. 309–313 (KGRIH) serves as a coordination point for 3'-phosphoadenylyl sulfate.

The protein belongs to the sulfotransferase 1 family. Highly expressed in skeletal muscle and fetal brain, and also found in adult brain, spinal cord, cerebellum and colon.

It is found in the golgi apparatus membrane. It catalyses the reaction alpha-D-glucosaminyl-[heparan sulfate](n) + 3'-phosphoadenylyl sulfate = 3-sulfo-alpha-D-glucosaminyl-[heparan sulfate](n) + adenosine 3',5'-bisphosphate + H(+). In terms of biological role, sulfotransferase that utilizes 3'-phospho-5'-adenylyl sulfate (PAPS) to catalyze the transfer of a sulfo group to position 3 of glucosamine residues in heparan. Catalyzes the rate limiting step in the biosynthesis of heparan sulfate (HSact). This modification is a crucial step in the biosynthesis of anticoagulant heparan sulfate as it completes the structure of the antithrombin pentasaccharide binding site. Also generates GlcUA-GlcNS or IdoUA-GlcNS and IdoUA2S-GlcNH2. The substrate-specific O-sulfation generates an enzyme-modified heparan sulfate which acts as a binding receptor to Herpes simplex virus-1 (HSV-1) and permits its entry. In Homo sapiens (Human), this protein is Heparan sulfate glucosamine 3-O-sulfotransferase 5 (HS3ST5).